The primary structure comprises 455 residues: Eukaryotic translation initiation factor 3 subunit E (455 aa).

The PCI domain occupies 256–425 (TDLFFSPAYI…GTVIMNHPPQ (170 aa)).

Belongs to the eIF-3 subunit E family. In terms of assembly, component of the eukaryotic translation initiation factor 3 (eIF-3) complex.

The protein localises to the cytoplasm. Functionally, component of the eukaryotic translation initiation factor 3 (eIF-3) complex, which is involved in protein synthesis of a specialized repertoire of mRNAs and, together with other initiation factors, stimulates binding of mRNA and methionyl-tRNAi to the 40S ribosome. The eIF-3 complex specifically targets and initiates translation of a subset of mRNAs involved in cell proliferation. In Neosartorya fischeri (strain ATCC 1020 / DSM 3700 / CBS 544.65 / FGSC A1164 / JCM 1740 / NRRL 181 / WB 181) (Aspergillus fischerianus), this protein is Eukaryotic translation initiation factor 3 subunit E (int6).